Reading from the N-terminus, the 293-residue chain is Undecaprenyl-diphosphatase (293 aa).

Transmembrane regions (helical) follow at residues 3–23, 43–63, 85–105, 109–129, 178–198, 203–223, 238–258, and 269–289; these read IALALKAVILGIVEGLTEFLP, KGKIFEIVIQFGAILAVCWEF, ANVVIASVPAIVLAFIFGKWI, LFNPISVALAFIVGGVVILLA, FALVPGTSRSGATIIGGMLFG, VATEFSFFLAIPVIFGATVYE, IFAVGFVFAFLSAFLCVRWLL, and FAWYRIAFGIVVLLTAYSGLV.

It belongs to the UppP family.

It is found in the cell inner membrane. The catalysed reaction is di-trans,octa-cis-undecaprenyl diphosphate + H2O = di-trans,octa-cis-undecaprenyl phosphate + phosphate + H(+). In terms of biological role, catalyzes the dephosphorylation of undecaprenyl diphosphate (UPP). Confers resistance to bacitracin. This is Undecaprenyl-diphosphatase from Cupriavidus necator (strain ATCC 17699 / DSM 428 / KCTC 22496 / NCIMB 10442 / H16 / Stanier 337) (Ralstonia eutropha).